We begin with the raw amino-acid sequence, 407 residues long: Phosphopentomutase (407 aa).

Mn(2+)-binding residues include D10, D306, H311, D347, H348, and H359.

Belongs to the phosphopentomutase family. Mn(2+) is required as a cofactor.

Its subcellular location is the cytoplasm. The enzyme catalyses 2-deoxy-alpha-D-ribose 1-phosphate = 2-deoxy-D-ribose 5-phosphate. It carries out the reaction alpha-D-ribose 1-phosphate = D-ribose 5-phosphate. Its pathway is carbohydrate degradation; 2-deoxy-D-ribose 1-phosphate degradation; D-glyceraldehyde 3-phosphate and acetaldehyde from 2-deoxy-alpha-D-ribose 1-phosphate: step 1/2. Its function is as follows. Isomerase that catalyzes the conversion of deoxy-ribose 1-phosphate (dRib-1-P) and ribose 1-phosphate (Rib-1-P) to deoxy-ribose 5-phosphate (dRib-5-P) and ribose 5-phosphate (Rib-5-P), respectively. The chain is Phosphopentomutase from Erwinia tasmaniensis (strain DSM 17950 / CFBP 7177 / CIP 109463 / NCPPB 4357 / Et1/99).